The following is a 450-amino-acid chain: Putative gustatory receptor 28a (450 aa).

Topologically, residues 1 to 47 (MAFKLWERFSQADNVFQALRPLTFISLLGLAPFRLNLNPRKEVQTSK) are cytoplasmic. The helical transmembrane segment at 48 to 68 (FSFFAGIVHFLFFVLCFGISV) threads the bilayer. The Extracellular portion of the chain corresponds to 69 to 87 (KEGDSIIGYFFQTNITRFS). N-linked (GlcNAc...) asparagine glycosylation occurs at Asn82. A helical transmembrane segment spans residues 88–108 (DGTLRLTGILAMSTIFGFAMF). The Cytoplasmic segment spans residues 109–138 (KRQRLVSIIQNNIVVDEIFVRLGMKLDYRR). The chain crosses the membrane as a helical span at residues 139–159 (ILLSSFLISLGMLLFNVIYLC). At 160-171 (VSYSLLVSATIS) the chain is on the extracellular side. A helical membrane pass occupies residues 172 to 192 (PSFVTFTTFALPHINISLMVF). Residues 193–292 (KFLCTTDLAR…CQTIEEYFTY (100 aa)) lie on the Cytoplasmic side of the membrane. Residues 293–313 (PLLGIIAISFLFILFDDFYIL) form a helical membrane-spanning segment. At 314–329 (EAILNPKRLDVFEADE) the chain is on the extracellular side. Residues 330–350 (FFAFFLMQLIWYIVIIVLIVE) form a helical membrane-spanning segment. Residues 351-407 (GSSRTILHSSYTAAIVHKILNITDDPELRDRLFRLSLQLSHRKVLFTAAGLFRLDRT) are Cytoplasmic-facing. A helical transmembrane segment spans residues 408 to 424 (LIFTITGAATCYLIILI). Residues 425 to 450 (QFRFTHHMDDTSSNSTNNLHSIHLGD) lie on the Extracellular side of the membrane. The N-linked (GlcNAc...) asparagine glycan is linked to Asn438.

This sequence belongs to the insect chemoreceptor superfamily. Gustatory receptor (GR) family. Gr2a subfamily. As to expression, in addition to expression in a large number of taste neurons, Gr28a is also expressed in a few nonchemosensory neurons, including the campaniform sensilla of the wing, leg stretch receptors, and multiple dendritic (MD) neurons in the abdomen. In larvea, is expressed in neurons of the terminal external chemosensory organ, the dorsal external chemosensory organ, as well as in the ventral and posterior pharyngeal sense organ.

Its subcellular location is the cell membrane. Probable gustatory receptor which mediates acceptance or avoidance behavior, depending on its substrates. Atypical expression also suggests nongustatory roles in the nervous system and tissues involved in proprioception, hygroreception, and other sensory modalities. It is also possible that it has chemosensory roles in the detection of internal ligands. The polypeptide is Putative gustatory receptor 28a (Gr28a) (Drosophila melanogaster (Fruit fly)).